The sequence spans 351 residues: Dihydroorotate dehydrogenase (quinone) (351 aa).

FMN is bound by residues 61–65 and threonine 85; that span reads AGLDK. Lysine 65 contributes to the substrate binding site. 110-114 serves as a coordination point for substrate; it reads NRMGF. Positions 139 and 172 each coordinate FMN. Residue asparagine 172 coordinates substrate. Residue serine 175 is the Nucleophile of the active site. Asparagine 177 contributes to the substrate binding site. Positions 217 and 245 each coordinate FMN. Residue 246 to 247 participates in substrate binding; the sequence is NT. FMN is bound by residues glycine 268, glycine 297, and 318–319; that span reads YS.

Belongs to the dihydroorotate dehydrogenase family. Type 2 subfamily. In terms of assembly, monomer. FMN serves as cofactor.

It localises to the cell membrane. The enzyme catalyses (S)-dihydroorotate + a quinone = orotate + a quinol. It functions in the pathway pyrimidine metabolism; UMP biosynthesis via de novo pathway; orotate from (S)-dihydroorotate (quinone route): step 1/1. Catalyzes the conversion of dihydroorotate to orotate with quinone as electron acceptor. In Xanthomonas oryzae pv. oryzae (strain MAFF 311018), this protein is Dihydroorotate dehydrogenase (quinone).